Reading from the N-terminus, the 181-residue chain is Mating-type protein A1 (181 aa).

The homeobox DNA-binding region spans 122 to 181 (DKKKRRHIPESSKELLEKAFKVKRFPNSKERERIARECGISPLQVRVWFTNKRARSKSRA).

It belongs to the MATA1 family.

The protein resides in the nucleus. Mating type proteins are sequence specific DNA-binding proteins that act as master switches in yeast differentiation by controlling gene expression in a cell type-specific fashion. The polypeptide is Mating-type protein A1 (MATA1) (Pichia angusta (Yeast)).